Here is a 166-residue protein sequence, read N- to C-terminus: NAD(P)H-quinone oxidoreductase subunit I, chloroplastic (166 aa).

4Fe-4S ferredoxin-type domains lie at 55 to 84 and 95 to 124; these read GRIH…VDWK and LNYS…MTEE. 8 residues coordinate [4Fe-4S] cluster: Cys64, Cys67, Cys70, Cys74, Cys104, Cys107, Cys110, and Cys114.

The protein belongs to the complex I 23 kDa subunit family. In terms of assembly, NDH is composed of at least 16 different subunits, 5 of which are encoded in the nucleus. [4Fe-4S] cluster is required as a cofactor.

It is found in the plastid. The protein resides in the chloroplast thylakoid membrane. The enzyme catalyses a plastoquinone + NADH + (n+1) H(+)(in) = a plastoquinol + NAD(+) + n H(+)(out). It carries out the reaction a plastoquinone + NADPH + (n+1) H(+)(in) = a plastoquinol + NADP(+) + n H(+)(out). Its function is as follows. NDH shuttles electrons from NAD(P)H:plastoquinone, via FMN and iron-sulfur (Fe-S) centers, to quinones in the photosynthetic chain and possibly in a chloroplast respiratory chain. The immediate electron acceptor for the enzyme in this species is believed to be plastoquinone. Couples the redox reaction to proton translocation, and thus conserves the redox energy in a proton gradient. The protein is NAD(P)H-quinone oxidoreductase subunit I, chloroplastic of Lasianthaea macrocephala (Lipochaeta macrocephala).